We begin with the raw amino-acid sequence, 203 residues long: Guanylate kinase (203 aa).

Positions 5-183 (GVLYILSAPS…AVEELKSVII (179 aa)) constitute a Guanylate kinase-like domain. 12–19 (APSGAGKT) contributes to the ATP binding site.

Belongs to the guanylate kinase family.

It is found in the cytoplasm. It catalyses the reaction GMP + ATP = GDP + ADP. In terms of biological role, essential for recycling GMP and indirectly, cGMP. The protein is Guanylate kinase of Geobacter sulfurreducens (strain ATCC 51573 / DSM 12127 / PCA).